We begin with the raw amino-acid sequence, 251 residues long: Triosephosphate isomerase (251 aa).

A substrate-binding site is contributed by 10–12 (NWK). The active-site Electrophile is the His-95. The active-site Proton acceptor is the Glu-167. Substrate is bound by residues Gly-173, Ser-213, and 234–235 (GG).

The protein belongs to the triosephosphate isomerase family. As to quaternary structure, homodimer.

Its subcellular location is the cytoplasm. The catalysed reaction is D-glyceraldehyde 3-phosphate = dihydroxyacetone phosphate. It functions in the pathway carbohydrate biosynthesis; gluconeogenesis. Its pathway is carbohydrate degradation; glycolysis; D-glyceraldehyde 3-phosphate from glycerone phosphate: step 1/1. Its function is as follows. Involved in the gluconeogenesis. Catalyzes stereospecifically the conversion of dihydroxyacetone phosphate (DHAP) to D-glyceraldehyde-3-phosphate (G3P). In Acetivibrio thermocellus (strain ATCC 27405 / DSM 1237 / JCM 9322 / NBRC 103400 / NCIMB 10682 / NRRL B-4536 / VPI 7372) (Clostridium thermocellum), this protein is Triosephosphate isomerase.